Consider the following 339-residue polypeptide: MO25-like protein 3 (339 aa).

This sequence belongs to the Mo25 family.

The sequence is that of MO25-like protein 3 (mop-25.3) from Caenorhabditis elegans.